Here is a 233-residue protein sequence, read N- to C-terminus: GSK-3-binding protein FRAT2 (233 aa).

The disordered stretch occupies residues 1–24 (MPCRREEEEEAGEEAEGEEEEDDS). Acidic residues predominate over residues 7–24 (EEEEAGEEAEGEEEEDDS). Residues 174–196 (DPHRLLQQLVLSGNLIKEAVRRL) are involved in GSK-3 binding. The segment at 204-233 (AATGPASAPGPGGGRSGPDRIALQPSGSLL) is disordered.

Belongs to the GSK-3-binding protein family. As to quaternary structure, binds GSK-3 and prevents GSK-3-dependent phosphorylation.

Its function is as follows. Positively regulates the Wnt signaling pathway by stabilizing beta-catenin through the association with GSK-3. The polypeptide is GSK-3-binding protein FRAT2 (FRAT2) (Homo sapiens (Human)).